We begin with the raw amino-acid sequence, 362 residues long: Glutamate 5-kinase (362 aa).

ATP is bound at residue K3. Substrate contacts are provided by S43, D128, and N140. Residues 160–161 (TD) and 202–208 (TGGMRTK) each bind ATP. The PUA domain occupies 267–348 (AGAILVDAGA…RDIENVLGYS (82 aa)).

This sequence belongs to the glutamate 5-kinase family.

The protein resides in the cytoplasm. The enzyme catalyses L-glutamate + ATP = L-glutamyl 5-phosphate + ADP. It participates in amino-acid biosynthesis; L-proline biosynthesis; L-glutamate 5-semialdehyde from L-glutamate: step 1/2. Its function is as follows. Catalyzes the transfer of a phosphate group to glutamate to form L-glutamate 5-phosphate. The sequence is that of Glutamate 5-kinase from Xanthomonas oryzae pv. oryzae (strain MAFF 311018).